A 267-amino-acid chain; its full sequence is 2-keto-3-deoxy-L-rhamnonate aldolase (267 aa).

His49 serves as the catalytic Proton acceptor. Residue Gln151 coordinates substrate. Mg(2+) is bound at residue Glu153. Ala178 and Asp179 together coordinate substrate. A Mg(2+)-binding site is contributed by Asp179.

This sequence belongs to the HpcH/HpaI aldolase family. KDR aldolase subfamily. As to quaternary structure, homohexamer. It depends on Mg(2+) as a cofactor.

It carries out the reaction 2-dehydro-3-deoxy-L-rhamnonate = (S)-lactaldehyde + pyruvate. In terms of biological role, catalyzes the reversible retro-aldol cleavage of 2-keto-3-deoxy-L-rhamnonate (KDR) to pyruvate and lactaldehyde. The sequence is that of 2-keto-3-deoxy-L-rhamnonate aldolase from Klebsiella pneumoniae subsp. pneumoniae (strain ATCC 700721 / MGH 78578).